The primary structure comprises 326 residues: Olfactory receptor 10X1 (326 aa).

The Extracellular portion of the chain corresponds to 1–41; it reads MVLNVYCCFFQISDIQTMKINQTILKEFILVGFSVYPHVQT. N-linked (GlcNAc...) asparagine glycosylation is present at N21. Residues 42–62 traverse the membrane as a helical segment; sequence FLFVVFFCLYLLTLAGNLIIM. Residues 63-70 lie on the Cytoplasmic side of the membrane; it reads GLTWVDRS. Residues 71–91 traverse the membrane as a helical segment; that stretch reads LHTPMYLFLSALSFSETCYTL. At 92 to 115 the chain is on the extracellular side; sequence TIVPKMLEDLLAKDRSISVTGCSL. C113 and C205 are joined by a disulfide. The helical transmembrane segment at 116 to 136 threads the bilayer; that stretch reads QMCFFLGLGGTNCIILTLMGY. The Cytoplasmic segment spans residues 137-155; the sequence is DRFLAICNPLRYPLLMTNI. A helical transmembrane segment spans residues 156–176; it reads VCGQLVASACTAGFFISLTET. Residues 177-213 lie on the Extracellular side of the membrane; it reads ALIFRDSFCRPNLVKHFFCHMLAVIRLSCIDSNHTEF. N209 carries an N-linked (GlcNAc...) asparagine glycan. Residues 214-233 form a helical membrane-spanning segment; sequence IITLISVSGLLGTLLLIILT. The Cytoplasmic segment spans residues 234-253; it reads DVFIISTVLRIPSAEGKQKA. Residues 254 to 274 form a helical membrane-spanning segment; the sequence is FTTCASHLTVVIIHFGFASIV. At 275–284 the chain is on the extracellular side; that stretch reads YLKPEASGDD. A helical transmembrane segment spans residues 285 to 305; sequence TLIAVPYTVITPFLSPIIFSL. Over 306 to 326 the chain is Cytoplasmic; sequence RNKDMKNAFRRMMGNTVALKK.

The protein belongs to the G-protein coupled receptor 1 family.

The protein resides in the cell membrane. Its function is as follows. Odorant receptor. The chain is Olfactory receptor 10X1 (OR10X1) from Homo sapiens (Human).